A 570-amino-acid polypeptide reads, in one-letter code: Sulfite reductase [NADPH] hemoprotein beta-component (570 aa).

[4Fe-4S] cluster contacts are provided by cysteine 434, cysteine 440, cysteine 479, and cysteine 483. Cysteine 483 is a siroheme binding site.

It belongs to the nitrite and sulfite reductase 4Fe-4S domain family. Alpha(8)-beta(8). The alpha component is a flavoprotein, the beta component is a hemoprotein. Siroheme is required as a cofactor. [4Fe-4S] cluster serves as cofactor.

It carries out the reaction hydrogen sulfide + 3 NADP(+) + 3 H2O = sulfite + 3 NADPH + 4 H(+). The protein operates within sulfur metabolism; hydrogen sulfide biosynthesis; hydrogen sulfide from sulfite (NADPH route): step 1/1. In terms of biological role, component of the sulfite reductase complex that catalyzes the 6-electron reduction of sulfite to sulfide. This is one of several activities required for the biosynthesis of L-cysteine from sulfate. The polypeptide is Sulfite reductase [NADPH] hemoprotein beta-component (Zymomonas mobilis subsp. mobilis (strain ATCC 31821 / ZM4 / CP4)).